The primary structure comprises 465 residues: UDP-glycosyltransferase 89A2 (465 aa).

Residues serine 291, 342 to 344 (VSQ), 359 to 367 (HCGWNSVLE), and 381 to 384 (EADQ) contribute to the UDP-alpha-D-glucose site.

It belongs to the UDP-glycosyltransferase family.

Functionally, glucosyltransferase that glucosylates benzoates and benzoate derivatives in vitro. This is UDP-glycosyltransferase 89A2 (UGT89A2) from Arabidopsis thaliana (Mouse-ear cress).